The primary structure comprises 650 residues: AP-1-like transcription factor YAP1 (650 aa).

The interval 1 to 89 is disordered; sequence MSVSTAKRSL…AFRERKERKM (89 aa). A phosphoserine mark is found at S9, S14, and S17. Composition is skewed to basic and acidic residues over residues 22–50, 58–68, and 80–89; these read EGSK…EQPK, KKQDLDPETKQ, and AFRERKERKM. 2 short sequence motifs (bipartite nuclear localization signal) span residues 35-42 and 68-75; these read HRRTGTRD and QKRTAQNR. Residues 64–127 enclose the bZIP domain; the sequence is PETKQKRTAQ…ITLVNELKKY (64 aa). The basic motif stretch occupies residues 67-90; sequence KQKRTAQNRAAQRAFRERKERKMK. The interval 92 to 120 is leucine-zipper; that stretch reads LEKKVQSLESIQQQNEVEATFLRDQLITL. 2 disordered regions span residues 149 to 169 and 183 to 251; these read HFSK…PNDD and QYPL…PNSS. Over residues 150-162 the composition is skewed to polar residues; sequence FSKNNVNHSNSEP. T165 carries the phosphothreonine modification. The segment covering 195 to 209 has biased composition (polar residues); that stretch reads SKNVGKQLPSPNDPS. Position 204 is a phosphoserine (S204). Positions 220–378 are transcription activation 1; that stretch reads QKKLSDATDS…YENSFSGFGR (159 aa). Low complexity predominate over residues 226–246; it reads ATDSSSATLDSLSNSNDVLNN. Residues 303–315 are n-CRD; the sequence is CSKMNQVCGTRQC. Intrachain disulfides connect C303-C598, C310-C629, C598-C620, C598-C629, and C620-C629. S372 bears the Phosphoserine mark. Over residues 392–414 the composition is skewed to low complexity; that stretch reads DNSTGSTDSTGSTGNKNKKNNNN. Disordered regions lie at residues 392-419, 510-532, and 551-591; these read DNST…DDVL, LFGE…DDES, and LQSV…VPSK. The transcription activation 2 stretch occupies residues 430 to 537; it reads NQVTNFFSPG…SDDESSLIKN (108 aa). S528 bears the Phosphoserine mark. Positions 551–570 are enriched in polar residues; it reads LQSVPGNESEISQKNGSSLQ. The span at 571–580 shows a compositional bias: low complexity; sequence NADKINNGND. Positions 598–629 are c-CRD; that stretch reads CSEIWDRITTHPKYSDIDVDGLCSELMAKAKC. Residues 614–621 carry the Nuclear export signal motif; the sequence is IDVDGLCS.

It belongs to the bZIP family. YAP subfamily. In terms of assembly, interacts independent of oxidation state in the cytoplasm with the karyopherin PSE1/KAP121 (and less strongly with KAP123). The reduced form of YAP1 interacts in the nucleus with the nuclear export protein CRM1, and in the cytoplasm with YBP1 and the peroxiredoxin HYR1/GPX3/ORP1. Interacts with RBG1. Depending on the oxidative stress inducing agent, YAP1 can undergo two distinct conformational changes, both involving disulfide bond formation, and both masking the nuclear export signal, thus abolishing nuclear export by CRM1/exportin 1. The disulfide stress-inducing agent diamide leads to the formation of one of three possible disulfide bonds in the c-CRD. Peroxide stress induces the formation of the HYR1/GPX3- and YBP1-dependent interdomain disulfide bond between Cys-303 and Cys-598 (causing nuclear localization of YAP1), and the possibly stabilizing bond between Cys-310 and Cys-629 (required for full activity of YAP1).

The protein localises to the nucleus. It localises to the cytoplasm. Transcription activator involved in oxidative stress response and redox homeostasis. Regulates the transcription of genes encoding antioxidant enzymes and components of the cellular thiol-reducing pathways, including the thioredoxin system (TRX2, TRR1), the glutaredoxin system (GSH1, GLR1), superoxide dismutase (SOD1, SOD2), glutathione peroxidase (GPX2), and thiol-specific peroxidases (TSA1, AHP1). The induction of some of these genes requires the cooperative action of both, YAP1 and SKN7. Preferentially binds to promoters with the core binding site 5'-TTA[CG]TAA-3'. Activity of the transcription factor is controlled through oxidation of specific cysteine residues resulting in the alteration of its subcellular location. Oxidative stress (as well as carbon stress, but not increased temperature, acidic pH, or ionic stress) induces nuclear accumulation and as a result YAP1 transcriptional activity. Activation by hydrogen peroxide or thiol-reactive chemicals elicit distinct adaptive gene responses. Nuclear export is restored when disulfide bonds are reduced by thioredoxin (TRX2), whose expression is controlled by YAP1, providing a mechanism for negative autoregulation. When overexpressed, YAP1 confers pleiotropic drug-resistance and increases cellular tolerance to cadmium, iron chelators and zinc. This chain is AP-1-like transcription factor YAP1, found in Saccharomyces cerevisiae (strain ATCC 204508 / S288c) (Baker's yeast).